Here is a 712-residue protein sequence, read N- to C-terminus: Serrate RNA effector molecule homolog (712 aa).

Disordered regions lie at residues 1–80 (MVDS…DSIY), 214–256 (ADIK…TEKS), and 620–712 (QRPV…DDIP). Composition is skewed to basic and acidic residues over residues 8 to 26 (GDRR…DYRR) and 34 to 54 (YDNK…SRGD). Residues 65 to 79 (RSGNGSDLPTESDSI) are compositionally biased toward polar residues. Over residues 214–236 (ADIKKDENGNGTEQPKEEPEVKQ) the composition is skewed to basic and acidic residues. The segment covering 240-251 (ATEELEEGAIED) has biased composition (acidic residues). Composition is skewed to basic and acidic residues over residues 621 to 637 (RPVD…DHRG) and 645 to 655 (GYGRERDDDRG). Positions 656–668 (PGGGGRNSFGGGG) are enriched in gly residues.

Belongs to the ARS2 family.

It localises to the nucleus. In terms of biological role, acts as a mediator between the cap-binding complex (CBC) and the primary microRNAs (miRNAs) processing machinery. Contributes to the stability and delivery of capped primary miRNA transcripts to the primary miRNA processing complex, thereby playing a role in RNA-mediated gene silencing (RNAi) by miRNAs. The protein is Serrate RNA effector molecule homolog of Caenorhabditis elegans.